The following is a 233-amino-acid chain: UPF0502 protein Sden_2282 (233 aa).

Polar residues predominate over residues 178 to 198 (TQHQRPPQTPHLSSRTNVDNS). Residues 178 to 204 (TQHQRPPQTPHLSSRTNVDNSYESDER) are disordered.

Belongs to the UPF0502 family.

In Shewanella denitrificans (strain OS217 / ATCC BAA-1090 / DSM 15013), this protein is UPF0502 protein Sden_2282.